We begin with the raw amino-acid sequence, 257 residues long: Snake venom serine protease salmonase (257 aa).

Residues 1–18 (MVLIRVLVNFLILQLSYA) form the signal peptide. Positions 19–24 (QKSSEL) are excised as a propeptide. Positions 25-248 (VIGGDECNIN…YIDWIQSIIA (224 aa)) constitute a Peptidase S1 domain. Cystine bridges form between C31-C162, C49-C65, C141-C209, C173-C188, and C199-C224. The active-site Charge relay system is the H64. The N-linked (GlcNAc...) asparagine glycan is linked to N78. D109 functions as the Charge relay system in the catalytic mechanism. S203 functions as the Charge relay system in the catalytic mechanism.

Belongs to the peptidase S1 family. Snake venom subfamily. Monomer. Expressed by the venom gland.

The protein localises to the secreted. Its function is as follows. Snake venom serine protease that may act in the hemostasis system of the prey. The chain is Snake venom serine protease salmonase from Gloydius brevicauda (Korean slamosa snake).